A 302-amino-acid polypeptide reads, in one-letter code: ATP synthase subunit a (302 aa).

The next 7 helical transmembrane spans lie at 61–81 (VDSL…FWLG), 119–139 (IAPL…MDLI), 148–168 (FEWV…FKIV), 172–192 (DPNI…FLTI), 214–234 (PVVK…ALLA), 252–272 (FVFI…AWPW), and 273–293 (AVFH…LTIV).

Belongs to the ATPase A chain family. In terms of assembly, F-type ATPases have 2 components, CF(1) - the catalytic core - and CF(0) - the membrane proton channel. CF(1) has five subunits: alpha(3), beta(3), gamma(1), delta(1), epsilon(1). CF(0) has three main subunits: a(1), b(2) and c(9-12). The alpha and beta chains form an alternating ring which encloses part of the gamma chain. CF(1) is attached to CF(0) by a central stalk formed by the gamma and epsilon chains, while a peripheral stalk is formed by the delta and b chains.

The protein resides in the cell inner membrane. Key component of the proton channel; it plays a direct role in the translocation of protons across the membrane. This is ATP synthase subunit a from Alcanivorax borkumensis (strain ATCC 700651 / DSM 11573 / NCIMB 13689 / SK2).